We begin with the raw amino-acid sequence, 283 residues long: Protein/nucleic acid deglycase HchA (283 aa).

3 residues coordinate Zn(2+): histidine 86, glutamate 91, and histidine 123. Residue cysteine 185 is the Nucleophile of the active site.

The protein belongs to the peptidase C56 family. HchA subfamily. In terms of assembly, homodimer.

It is found in the cytoplasm. It catalyses the reaction N(omega)-(1-hydroxy-2-oxopropyl)-L-arginyl-[protein] + H2O = lactate + L-arginyl-[protein] + H(+). The catalysed reaction is N(6)-(1-hydroxy-2-oxopropyl)-L-lysyl-[protein] + H2O = lactate + L-lysyl-[protein] + H(+). The enzyme catalyses S-(1-hydroxy-2-oxopropyl)-L-cysteinyl-[protein] + H2O = lactate + L-cysteinyl-[protein] + H(+). It carries out the reaction N(omega)-(1-hydroxy-2-oxoethyl)-L-arginyl-[protein] + H2O = L-arginyl-[protein] + glycolate + H(+). It catalyses the reaction N(6)-(1-hydroxy-2-oxoethyl)-L-lysyl-[protein] + H2O = glycolate + L-lysyl-[protein] + H(+). The catalysed reaction is S-(1-hydroxy-2-oxoethyl)-L-cysteinyl-[protein] + H2O = glycolate + L-cysteinyl-[protein] + H(+). The enzyme catalyses N(2)-(1-hydroxy-2-oxopropyl)-dGTP + H2O = lactate + dGTP + H(+). It carries out the reaction N(2)-(1-hydroxy-2-oxopropyl)-GTP + H2O = lactate + GTP + H(+). It catalyses the reaction N(2)-(1-hydroxy-2-oxopropyl)-GDP + H2O = lactate + GDP + H(+). The catalysed reaction is N(2)-(1-hydroxy-2-oxopropyl)-GMP + H2O = lactate + GMP + H(+). The enzyme catalyses N(2)-(1-hydroxy-2-oxoethyl)-dGTP + H2O = dGTP + glycolate + H(+). It carries out the reaction N(2)-(1-hydroxy-2-oxoethyl)-GTP + H2O = glycolate + GTP + H(+). It catalyses the reaction N(2)-(1-hydroxy-2-oxoethyl)-GDP + H2O = glycolate + GDP + H(+). The catalysed reaction is N(2)-(1-hydroxy-2-oxoethyl)-GMP + H2O = glycolate + GMP + H(+). The enzyme catalyses an N(2)-(1-hydroxy-2-oxopropyl)-guanosine in RNA + H2O = a guanosine in RNA + lactate + H(+). It carries out the reaction an N(2)-(1-hydroxy-2-oxopropyl)-2'-deoxyguanosine in DNA + H2O = a 2'-deoxyguanosine in DNA + lactate + H(+). It catalyses the reaction an N(2)-(1-hydroxy-2-oxoethyl)-guanosine in RNA + H2O = a guanosine in RNA + glycolate + H(+). The catalysed reaction is an N(2)-(1-hydroxy-2-oxoethyl)-2'-deoxyguanosine in DNA + H2O = a 2'-deoxyguanosine in DNA + glycolate + H(+). Protein and nucleotide deglycase that catalyzes the deglycation of the Maillard adducts formed between amino groups of proteins or nucleotides and reactive carbonyl groups of glyoxals. Thus, functions as a protein deglycase that repairs methylglyoxal- and glyoxal-glycated proteins, and releases repaired proteins and lactate or glycolate, respectively. Deglycates cysteine, arginine and lysine residues in proteins, and thus reactivates these proteins by reversing glycation by glyoxals. Acts on early glycation intermediates (hemithioacetals and aminocarbinols), preventing the formation of Schiff bases and advanced glycation endproducts (AGE). Also functions as a nucleotide deglycase able to repair glycated guanine in the free nucleotide pool (GTP, GDP, GMP, dGTP) and in DNA and RNA. Is thus involved in a major nucleotide repair system named guanine glycation repair (GG repair), dedicated to reversing methylglyoxal and glyoxal damage via nucleotide sanitization and direct nucleic acid repair. Plays an important role in protecting cells from carbonyl stress. The polypeptide is Protein/nucleic acid deglycase HchA (Escherichia coli O81 (strain ED1a)).